Here is a 319-residue protein sequence, read N- to C-terminus: Taste receptor type 2 member 39 (319 aa).

Topologically, residues 1 to 16 (MAQPSNYWKQDVLPLS) are extracellular. Residues 17–37 (ILMLTLVATECTIGIIASGIV) form a helical membrane-spanning segment. Topologically, residues 38 to 65 (MAVNAVSWVQKKAISITTRILLLLSVSR) are cytoplasmic. The helical transmembrane segment at 66–86 (IGLQSIMLIEITSSIFNVAFY) threads the bilayer. Over 87-97 (NSVLYRVSNVS) the chain is Extracellular. Asn-95 carries N-linked (GlcNAc...) asparagine glycosylation. A helical membrane pass occupies residues 98–118 (FVFLNYCSLWFAALLSFFHFV). Residues 119 to 137 (KIANFSYPLFFKLKWRISE) are Cytoplasmic-facing. The helical transmembrane segment at 138–158 (LMPWLLWLSVFISFSSSMFFS) threads the bilayer. Residues 159–194 (KHKFTVNNNNSLSNNICNFTMKLYVVETNVVNVSFL) are Extracellular-facing. 3 N-linked (GlcNAc...) asparagine glycosylation sites follow: Asn-167, Asn-176, and Asn-190. Residues 195-215 (FISGILPPLTMFVATATLLIF) traverse the membrane as a helical segment. Residues 216–247 (SLRRHTLNMRNSATGSRNPCIEAHMQAIKETS) are Cytoplasmic-facing. The chain crosses the membrane as a helical span at residues 248-268 (CFLFLYILNAAALLLSTSNIV). At 269–273 (DASLF) the chain is on the extracellular side. A helical membrane pass occupies residues 274–294 (WSIVIRIVLPVYPAGHSVLLI). Residues 295-319 (QNNPGLRRTWKHLQSQIHLYLQNRF) lie on the Cytoplasmic side of the membrane.

The protein belongs to the G-protein coupled receptor T2R family.

It is found in the membrane. Putative taste receptor which may play a role in the perception of bitterness. This Mus musculus (Mouse) protein is Taste receptor type 2 member 39 (Tas2r39).